The chain runs to 311 residues: 4-diphosphocytidyl-2-C-methyl-D-erythritol kinase (311 aa).

Lys-16 is an active-site residue. ATP is bound at residue 100–110; sequence PIGAGLAGGSS. Asp-142 is a catalytic residue.

This sequence belongs to the GHMP kinase family. IspE subfamily.

The catalysed reaction is 4-CDP-2-C-methyl-D-erythritol + ATP = 4-CDP-2-C-methyl-D-erythritol 2-phosphate + ADP + H(+). It functions in the pathway isoprenoid biosynthesis; isopentenyl diphosphate biosynthesis via DXP pathway; isopentenyl diphosphate from 1-deoxy-D-xylulose 5-phosphate: step 3/6. Functionally, catalyzes the phosphorylation of the position 2 hydroxy group of 4-diphosphocytidyl-2C-methyl-D-erythritol. This chain is 4-diphosphocytidyl-2-C-methyl-D-erythritol kinase, found in Prochlorococcus marinus (strain MIT 9301).